A 932-amino-acid polypeptide reads, in one-letter code: Lipoxygenase 2.2, chloroplastic (932 aa).

Residues 79–219 (MKATVSVHMK…CSPDKRTFFP (141 aa)) enclose the PLAT domain. In terms of domain architecture, Lipoxygenase spans 223–932 (SYIPSQTPKG…EMGIPNSISI (710 aa)). Basic and acidic residues predominate over residues 270-284 (PESKRPVLGGKEHPY). The disordered stretch occupies residues 270-311 (PESKRPVLGGKEHPYPRRCRTGRPRSKTDPSSEEESHKKGEM). Residues 285–294 (PRRCRTGRPR) are compositionally biased toward basic residues. A compositionally biased stretch (basic and acidic residues) spans 295 to 311 (SKTDPSSEEESHKKGEM). Fe cation is bound by residues His588, His593, His778, Asn782, and Ile932.

Belongs to the lipoxygenase family. Fe cation serves as cofactor.

Its subcellular location is the plastid. It localises to the chloroplast. It catalyses the reaction (9Z,12Z)-octadecadienoate + O2 = (13S)-hydroperoxy-(9Z,11E)-octadecadienoate. It carries out the reaction (9Z,12Z,15Z)-octadecatrienoate + O2 = (13S)-hydroperoxy-(9Z,11E,15Z)-octadecatrienoate. It functions in the pathway lipid metabolism; oxylipin biosynthesis. Plant lipoxygenase may be involved in a number of diverse aspects of plant physiology including growth and development, pest resistance, and senescence or responses to wounding. This enzyme exhibits linoleate 13-lipoxygenase activity. This chain is Lipoxygenase 2.2, chloroplastic (LOX2.2), found in Hordeum vulgare (Barley).